We begin with the raw amino-acid sequence, 428 residues long: Serine--tRNA ligase (428 aa).

Thr-235–Glu-237 contacts L-serine. Arg-266–Glu-268 provides a ligand contact to ATP. An L-serine-binding site is contributed by Glu-289. An ATP-binding site is contributed by Glu-353–Ser-356. Residue Ser-389 participates in L-serine binding.

The protein belongs to the class-II aminoacyl-tRNA synthetase family. Type-1 seryl-tRNA synthetase subfamily. In terms of assembly, homodimer. The tRNA molecule binds across the dimer.

It localises to the cytoplasm. The catalysed reaction is tRNA(Ser) + L-serine + ATP = L-seryl-tRNA(Ser) + AMP + diphosphate + H(+). It catalyses the reaction tRNA(Sec) + L-serine + ATP = L-seryl-tRNA(Sec) + AMP + diphosphate + H(+). Its pathway is aminoacyl-tRNA biosynthesis; selenocysteinyl-tRNA(Sec) biosynthesis; L-seryl-tRNA(Sec) from L-serine and tRNA(Sec): step 1/1. In terms of biological role, catalyzes the attachment of serine to tRNA(Ser). Is also able to aminoacylate tRNA(Sec) with serine, to form the misacylated tRNA L-seryl-tRNA(Sec), which will be further converted into selenocysteinyl-tRNA(Sec). The sequence is that of Serine--tRNA ligase from Shewanella sp. (strain W3-18-1).